Reading from the N-terminus, the 111-residue chain is ATP-dependent Clp protease adapter protein ClpS (111 aa).

The protein belongs to the ClpS family. As to quaternary structure, binds to the N-terminal domain of the chaperone ClpA.

Functionally, involved in the modulation of the specificity of the ClpAP-mediated ATP-dependent protein degradation. The protein is ATP-dependent Clp protease adapter protein ClpS of Corynebacterium aurimucosum (strain ATCC 700975 / DSM 44827 / CIP 107346 / CN-1) (Corynebacterium nigricans).